We begin with the raw amino-acid sequence, 957 residues long: Histone-lysine N-methyltransferase, H3 lysine-9 specific SUVH3 (957 aa).

The 171-residue stretch at 73-243 folds into the YDG domain; the sequence is GHPPGVALGD…PQVCKFLMHG (171 aa). Positions 182 to 209 are disordered; it reads EAGGGEGGGGGEGGGGAKKGKGGKGGGK. Residues 183–198 show a composition bias toward gly residues; sequence AGGGEGGGGGEGGGGA. A Pre-SET domain is found at 319–441; that stretch reads DVSGGQEAVP…HECGDGCSAK (123 aa). An SET domain is found at 455-920; the sequence is LPLEVFMTES…QLEELSYNYG (466 aa). Disordered stretches follow at residues 552-595, 611-647, and 783-805; these read DAAR…GGAE, AAGTAPGAGDNMDGVEGPAAQRSGGEEAAAGPGSSGA, and PPALPSTSDVGNGGTTGSGGGGG. Residues 560–578 show a composition bias toward low complexity; that stretch reads QQPQQQQPQQQQQQPAAGG. Positions 793–805 are enriched in gly residues; that stretch reads GNGGTTGSGGGGG. Residues 941–957 form the Post-SET domain; that stretch reads FVMQCNCGAVGCIGNLM.

It belongs to the class V-like SAM-binding methyltransferase superfamily. Histone-lysine methyltransferase family. Suvar3-9 subfamily.

The protein resides in the nucleus. It localises to the chromosome. It catalyses the reaction L-lysyl(9)-[histone H3] + S-adenosyl-L-methionine = N(6)-methyl-L-lysyl(9)-[histone H3] + S-adenosyl-L-homocysteine + H(+). Histone methyltransferase. Monomethylates specifically 'Lys-9' of histone H3. H3 'Lys-9Me1' (H3K9me1) functions as an epigenetic mark of repressed chromatin. The chain is Histone-lysine N-methyltransferase, H3 lysine-9 specific SUVH3 (SUVH3) from Chlamydomonas reinhardtii (Chlamydomonas smithii).